A 234-amino-acid polypeptide reads, in one-letter code: Ubiquitin domain-containing protein 2 (234 aa).

Residues 1-46 (MGGCVGAQHDSSGSLNENSDGTGVALGRNQPLKKEKPKWKSDYPMT) form a disordered region. Polar residues predominate over residues 9–21 (HDSSGSLNENSDG). Residues 32-41 (LKKEKPKWKS) are compositionally biased toward basic and acidic residues. Positions 152-227 (SQLRLRLSTG…VQVIVSQPVQ (76 aa)) constitute a Ubiquitin-like domain.

It is found in the cytoplasm. The polypeptide is Ubiquitin domain-containing protein 2 (Ubtd2) (Mus musculus (Mouse)).